We begin with the raw amino-acid sequence, 733 residues long: Ferric aerobactin receptor (733 aa).

The N-terminal stretch at 1–25 is a signal peptide; the sequence is MMISKKYTLWALNPLLLTMMAPAVA. The short motif at 31–38 is the TonB box element; that stretch reads ETFVVSAN. Residues 43–153 enclose the TBDR plug domain; the sequence is TVAEMAQTTW…TGGLINIVTK (111 aa). The TBDR beta-barrel domain maps to 158-733; sequence ETIMEFEAGT…TFGLNYSVLF (576 aa). The TonB C-terminal box motif lies at 716–733; the sequence is YDYKGRGRTFGLNYSVLF.

This sequence belongs to the TonB-dependent receptor family.

Its subcellular location is the cell outer membrane. In terms of biological role, receptor for aerobactin. The polypeptide is Ferric aerobactin receptor (iutA) (Klebsiella pneumoniae).